A 129-amino-acid chain; its full sequence is HTH-type transcriptional regulator HmrR (129 aa).

The HTH merR-type domain occupies 1–68 (MNIGEASERS…VEECRQLLAL (68 aa)). Positions 4-23 (GEASERSGLPSKTIRYYEDI) form a DNA-binding region, H-T-H motif.

In terms of assembly, homodimer.

The protein resides in the cytoplasm. Functionally, regulates the transcription of actP. It detects cytoplasmic copper stress and activates transcription in response to increasing copper concentrations. In the absence of copper, it negatively regulates the transcription of actP. The sequence is that of HTH-type transcriptional regulator HmrR (hmrR) from Rhizobium leguminosarum bv. viciae.